The primary structure comprises 279 residues: Putative cysteine-rich repeat secretory protein 22 (279 aa).

The first 31 residues, Met1 to Ser31, serve as a signal peptide directing secretion. 2 consecutive Gnk2-homologous domains span residues Tyr44 to Ser146 and Tyr152 to Phe276.

The protein belongs to the cysteine-rich repeat secretory protein family.

The protein resides in the secreted. The chain is Putative cysteine-rich repeat secretory protein 22 (CRRSP22) from Arabidopsis thaliana (Mouse-ear cress).